We begin with the raw amino-acid sequence, 542 residues long: La-related protein 7 homolog (542 aa).

Residues 112-239 enclose the HTH La-type RNA-binding domain; that stretch reads VAEELDIKES…KRRFPFNLEQ (128 aa). An RRM domain is found at 247–335; it reads RTLYIDFLPP…GSIRIITYKK (89 aa). In terms of domain architecture, xRRM spans 374–542; the sequence is EIKQNCLIKI…KQNITQNYNK (169 aa).

It belongs to the LARP7 family. As to quaternary structure, component of the telomerase holoenzyme complex, composed of the catalytic core (the catalytic subunit TERT, the telomerase RNA template component TER and TAP65/p65), which is associated with two heterotrimeric subcomplexes: (i) the replication protein A (RPA)-related subcomplex, composed of TEB1, RPA2/TEB2 and RPA3/TEB3 and (ii) the CST-like subcomplex, composed of TAP75/p75, TAP45/p45 and TAP19/p19. TEB1 and the CST-like subcomplex are tethered to the catalytic core by TAP50/p50.

The protein resides in the chromosome. It is found in the telomere. RNA-binding protein required for assembly of the holoenzyme telomerase ribonucleoprotein (RNP) complex. Telomerase is an essential ribonucleoprotein enzyme that copies new telomeric repeats onto chromosome ends by repetitively synthesizing the short telomere-repeat sequence 5'-TTGGGG-3' using an RNA template component TER. TAP65/p65 specifically binds telomerase RNA template TER and is required for biogenesis and placement of the TER stem-terminus element: TAP65/p65 first protects the 3'-end of TER from degradation and acts as a chaperone to correctly fold TER for protein binding; it then bends TER stem-loop IV to position it for interaction of stem-loop IV with catalytic TERT RNA-binding domain. This chain is La-related protein 7 homolog, found in Tetrahymena thermophila (strain SB210).